Reading from the N-terminus, the 299-residue chain is Tyrosine recombinase XerC (299 aa).

One can recognise a Core-binding (CB) domain in the interval 1–85 (MERQLEAYCA…AVRGLYRYLN (85 aa)). Positions 106 to 285 (RLPKVLDTDR…DFQHLAAVYD (180 aa)) constitute a Tyr recombinase domain. Catalysis depends on residues arginine 146, lysine 170, histidine 237, arginine 240, and histidine 263. Tyrosine 272 (O-(3'-phospho-DNA)-tyrosine intermediate) is an active-site residue.

This sequence belongs to the 'phage' integrase family. XerC subfamily. In terms of assembly, forms a cyclic heterotetrameric complex composed of two molecules of XerC and two molecules of XerD.

Its subcellular location is the cytoplasm. In terms of biological role, site-specific tyrosine recombinase, which acts by catalyzing the cutting and rejoining of the recombining DNA molecules. The XerC-XerD complex is essential to convert dimers of the bacterial chromosome into monomers to permit their segregation at cell division. It also contributes to the segregational stability of plasmids. In Pseudomonas putida (strain W619), this protein is Tyrosine recombinase XerC.